We begin with the raw amino-acid sequence, 314 residues long: Ribosomal RNA small subunit methyltransferase H (314 aa).

S-adenosyl-L-methionine-binding positions include 36–38 (GGH), D56, F81, D103, and Q110.

It belongs to the methyltransferase superfamily. RsmH family.

The protein resides in the cytoplasm. It carries out the reaction cytidine(1402) in 16S rRNA + S-adenosyl-L-methionine = N(4)-methylcytidine(1402) in 16S rRNA + S-adenosyl-L-homocysteine + H(+). Functionally, specifically methylates the N4 position of cytidine in position 1402 (C1402) of 16S rRNA. This is Ribosomal RNA small subunit methyltransferase H from Shewanella sediminis (strain HAW-EB3).